The following is a 239-amino-acid chain: DnaA regulatory inactivator Hda (239 aa).

It belongs to the DnaA family. HdA subfamily. In terms of assembly, the active form seems to be an ADP-bound monomer. Forms the RIDA complex (regulatory inactivation of DnaA) of ATP-DnaA, ADP-Hda and the DNA-loaded beta sliding clamp (dnaN).

Mediates the interaction of DNA replication initiator protein DnaA with DNA polymerase subunit beta sliding clamp (dnaN). Stimulates hydrolysis of ATP-DnaA to ADP-DnaA, rendering DnaA inactive for reinitiation, a process called regulatory inhibition of DnaA or RIDA. The protein is DnaA regulatory inactivator Hda of Yersinia enterocolitica serotype O:8 / biotype 1B (strain NCTC 13174 / 8081).